The following is a 364-amino-acid chain: Aminomethyltransferase (364 aa).

This sequence belongs to the GcvT family. As to quaternary structure, the glycine cleavage system is composed of four proteins: P, T, L and H.

The catalysed reaction is N(6)-[(R)-S(8)-aminomethyldihydrolipoyl]-L-lysyl-[protein] + (6S)-5,6,7,8-tetrahydrofolate = N(6)-[(R)-dihydrolipoyl]-L-lysyl-[protein] + (6R)-5,10-methylene-5,6,7,8-tetrahydrofolate + NH4(+). The glycine cleavage system catalyzes the degradation of glycine. This chain is Aminomethyltransferase, found in Shewanella baltica (strain OS195).